The primary structure comprises 655 residues: p-hydroxybenzoic acid efflux pump subunit AaeB (655 aa).

11 helical membrane passes run 13 to 33 (FAVKLACAIVLALFIGFHFQL), 38 to 58 (WAVLTAAIVAAGPAFAAGGEP), 69 to 89 (LRIIGTFIGCIAALIIIISMI), 93 to 113 (LLMILVCCVWAGFCTWISSLV), 121 to 141 (WGLSGYTALIIVITIQTEPLL), 152 to 172 (EIVIGIGCAILADLLFSPRSI), 370 to 390 (LFWLWTGWTSGNGAMVMIAVV), 407 to 427 (FIYGTLAALPLGLLYFLVIIP), 431 to 451 (QSMLLLCLSLAVLGFFIGIEV), 459 to 479 (MGALASTINIIVLDNPMTFHF), and 482 to 502 (FLDSALGQIVGCMLAFIVILL).

The protein belongs to the aromatic acid exporter ArAE (TC 2.A.85) family.

It localises to the cell inner membrane. In terms of biological role, forms an efflux pump with AaeA. Could function as a metabolic relief valve, allowing to eliminate certain compounds when they accumulate to high levels in the cell. This chain is p-hydroxybenzoic acid efflux pump subunit AaeB, found in Salmonella dublin (strain CT_02021853).